The sequence spans 485 residues: Proline--tRNA ligase (485 aa).

The protein belongs to the class-II aminoacyl-tRNA synthetase family. ProS type 3 subfamily. As to quaternary structure, homodimer.

The protein resides in the cytoplasm. It carries out the reaction tRNA(Pro) + L-proline + ATP = L-prolyl-tRNA(Pro) + AMP + diphosphate. Its function is as follows. Catalyzes the attachment of proline to tRNA(Pro) in a two-step reaction: proline is first activated by ATP to form Pro-AMP and then transferred to the acceptor end of tRNA(Pro). The chain is Proline--tRNA ligase from Aeropyrum pernix (strain ATCC 700893 / DSM 11879 / JCM 9820 / NBRC 100138 / K1).